The following is a 267-amino-acid chain: uncharacterized protein (267 aa).

This is an uncharacterized protein from Escherichia coli (strain K12).